A 204-amino-acid polypeptide reads, in one-letter code: Somatotropin (204 aa).

A signal peptide spans 1 to 17 (MDRAVLLLSVLSLGVSS). Gln-18 is modified (pyrrolidone carboxylic acid). Position 35 (His-35) interacts with Zn(2+). Residues Cys-69 and Cys-177 are joined by a disulfide bond. Glu-186 contacts Zn(2+). An intrachain disulfide couples Cys-194 to Cys-202.

It belongs to the somatotropin/prolactin family.

It is found in the secreted. In terms of biological role, growth hormone plays an important role in growth control and is involved in the regulation of several anabolic processes. Implicated as an osmoregulatory substance important for seawater adaptation. This Morone saxatilis (Striped bass) protein is Somatotropin (gh).